The sequence spans 512 residues: Protein spinster homolog 3 (512 aa).

Residues 1-30 (MAGGMSAECPEPGPGGLQGQSPGPGRQCPP) are disordered. 12 helical membrane-spanning segments follow: residues 50 to 70 (VLCY…GVLL), 84 to 104 (GLLQ…FGYL), 112 to 132 (ATMS…SFIS), 145 to 165 (IVGT…GDLF), 173 to 193 (VLAV…VLGS), 204 to 224 (WALR…ILLV), 260 to 280 (FVWS…LGFW), 309 to 329 (LIFG…GAEA), 343 to 365 (LICA…LAPT), 377 to 397 (GELL…SVVV), 411 to 431 (VGHI…SSVL), and 450 to 470 (FLCC…TALY). Residues 481–512 (PVTGTPDSNDVDSNDLERQGLLSGAGASTEEP) form a disordered region.

This sequence belongs to the major facilitator superfamily. Spinster (TC 2.A.1.49) family.

It is found in the membrane. Its function is as follows. Sphingolipid transporter. The protein is Protein spinster homolog 3 (SPNS3) of Homo sapiens (Human).